The sequence spans 249 residues: Aspartate/glutamate leucyltransferase (249 aa).

It belongs to the R-transferase family. Bpt subfamily.

The protein localises to the cytoplasm. It catalyses the reaction N-terminal L-glutamyl-[protein] + L-leucyl-tRNA(Leu) = N-terminal L-leucyl-L-glutamyl-[protein] + tRNA(Leu) + H(+). It carries out the reaction N-terminal L-aspartyl-[protein] + L-leucyl-tRNA(Leu) = N-terminal L-leucyl-L-aspartyl-[protein] + tRNA(Leu) + H(+). Functions in the N-end rule pathway of protein degradation where it conjugates Leu from its aminoacyl-tRNA to the N-termini of proteins containing an N-terminal aspartate or glutamate. In Brucella abortus (strain S19), this protein is Aspartate/glutamate leucyltransferase.